The sequence spans 243 residues: Probable transcriptional regulatory protein TTE1135 (243 aa).

This sequence belongs to the TACO1 family.

The protein localises to the cytoplasm. This is Probable transcriptional regulatory protein TTE1135 from Caldanaerobacter subterraneus subsp. tengcongensis (strain DSM 15242 / JCM 11007 / NBRC 100824 / MB4) (Thermoanaerobacter tengcongensis).